Here is a 301-residue protein sequence, read N- to C-terminus: UDP-3-O-acyl-N-acetylglucosamine deacetylase (301 aa).

The Zn(2+) site is built by His81, His237, and Asp241. The active-site Proton donor is the His264.

Belongs to the LpxC family. The cofactor is Zn(2+).

It carries out the reaction a UDP-3-O-[(3R)-3-hydroxyacyl]-N-acetyl-alpha-D-glucosamine + H2O = a UDP-3-O-[(3R)-3-hydroxyacyl]-alpha-D-glucosamine + acetate. Its pathway is glycolipid biosynthesis; lipid IV(A) biosynthesis; lipid IV(A) from (3R)-3-hydroxytetradecanoyl-[acyl-carrier-protein] and UDP-N-acetyl-alpha-D-glucosamine: step 2/6. Functionally, catalyzes the hydrolysis of UDP-3-O-myristoyl-N-acetylglucosamine to form UDP-3-O-myristoylglucosamine and acetate, the committed step in lipid A biosynthesis. This Leptospira interrogans serogroup Icterohaemorrhagiae serovar copenhageni (strain Fiocruz L1-130) protein is UDP-3-O-acyl-N-acetylglucosamine deacetylase.